We begin with the raw amino-acid sequence, 254 residues long: 5'-nucleotidase SurE (254 aa).

The a divalent metal cation site is built by Asp8, Asp9, Ser38, and Asn91.

The protein belongs to the SurE nucleotidase family. A divalent metal cation serves as cofactor.

It localises to the cytoplasm. The enzyme catalyses a ribonucleoside 5'-phosphate + H2O = a ribonucleoside + phosphate. Nucleotidase that shows phosphatase activity on nucleoside 5'-monophosphates. This Anaeromyxobacter dehalogenans (strain 2CP-C) protein is 5'-nucleotidase SurE.